Consider the following 258-residue polypeptide: 1-(5-phosphoribosyl)-5-[(5-phosphoribosylamino)methylideneamino] imidazole-4-carboxamide isomerase (258 aa).

The active-site Proton acceptor is D9. The Proton donor role is filled by D131.

The protein belongs to the HisA/HisF family.

The protein localises to the cytoplasm. The catalysed reaction is 1-(5-phospho-beta-D-ribosyl)-5-[(5-phospho-beta-D-ribosylamino)methylideneamino]imidazole-4-carboxamide = 5-[(5-phospho-1-deoxy-D-ribulos-1-ylimino)methylamino]-1-(5-phospho-beta-D-ribosyl)imidazole-4-carboxamide. Its pathway is amino-acid biosynthesis; L-histidine biosynthesis; L-histidine from 5-phospho-alpha-D-ribose 1-diphosphate: step 4/9. This is 1-(5-phosphoribosyl)-5-[(5-phosphoribosylamino)methylideneamino] imidazole-4-carboxamide isomerase from Salinibacter ruber (strain DSM 13855 / M31).